The chain runs to 418 residues: ATP phosphoribosyltransferase regulatory subunit (418 aa).

This sequence belongs to the class-II aminoacyl-tRNA synthetase family. HisZ subfamily. In terms of assembly, heteromultimer composed of HisG and HisZ subunits.

The protein localises to the cytoplasm. The protein operates within amino-acid biosynthesis; L-histidine biosynthesis; L-histidine from 5-phospho-alpha-D-ribose 1-diphosphate: step 1/9. Its function is as follows. Required for the first step of histidine biosynthesis. May allow the feedback regulation of ATP phosphoribosyltransferase activity by histidine. The sequence is that of ATP phosphoribosyltransferase regulatory subunit from Acetivibrio thermocellus (strain ATCC 27405 / DSM 1237 / JCM 9322 / NBRC 103400 / NCIMB 10682 / NRRL B-4536 / VPI 7372) (Clostridium thermocellum).